We begin with the raw amino-acid sequence, 208 residues long: N-(5'-phosphoribosyl)anthranilate isomerase (208 aa).

Belongs to the TrpF family.

The enzyme catalyses N-(5-phospho-beta-D-ribosyl)anthranilate = 1-(2-carboxyphenylamino)-1-deoxy-D-ribulose 5-phosphate. Its pathway is amino-acid biosynthesis; L-tryptophan biosynthesis; L-tryptophan from chorismate: step 3/5. The chain is N-(5'-phosphoribosyl)anthranilate isomerase from Methanococcus maripaludis (strain C5 / ATCC BAA-1333).